The sequence spans 329 residues: Methionyl-tRNA formyltransferase (329 aa).

Residue 112–115 (SILP) participates in (6S)-5,6,7,8-tetrahydrofolate binding.

It belongs to the Fmt family.

The enzyme catalyses L-methionyl-tRNA(fMet) + (6R)-10-formyltetrahydrofolate = N-formyl-L-methionyl-tRNA(fMet) + (6S)-5,6,7,8-tetrahydrofolate + H(+). Attaches a formyl group to the free amino group of methionyl-tRNA(fMet). The formyl group appears to play a dual role in the initiator identity of N-formylmethionyl-tRNA by promoting its recognition by IF2 and preventing the misappropriation of this tRNA by the elongation apparatus. The chain is Methionyl-tRNA formyltransferase from Shewanella sediminis (strain HAW-EB3).